The following is a 267-amino-acid chain: Hydroxyethylthiazole kinase (267 aa).

A substrate-binding site is contributed by methionine 44. ATP contacts are provided by lysine 120 and threonine 166. Residue glycine 193 participates in substrate binding.

This sequence belongs to the Thz kinase family. Mg(2+) is required as a cofactor.

The catalysed reaction is 5-(2-hydroxyethyl)-4-methylthiazole + ATP = 4-methyl-5-(2-phosphooxyethyl)-thiazole + ADP + H(+). It functions in the pathway cofactor biosynthesis; thiamine diphosphate biosynthesis; 4-methyl-5-(2-phosphoethyl)-thiazole from 5-(2-hydroxyethyl)-4-methylthiazole: step 1/1. Its function is as follows. Catalyzes the phosphorylation of the hydroxyl group of 4-methyl-5-beta-hydroxyethylthiazole (THZ). The sequence is that of Hydroxyethylthiazole kinase from Desulfitobacterium hafniense (strain DSM 10664 / DCB-2).